The chain runs to 304 residues: 2-oxoacid:ferredoxin oxidoreductase 2, subunit beta (304 aa).

Residues C12, C15, and C46 each contribute to the [4Fe-4S] cluster site. Thiamine diphosphate contacts are provided by residues 44 to 47 (IGCS) and H65. Mg(2+) is bound at residue D90. 91–92 (GD) contacts thiamine diphosphate. Residues N118 and V120 each coordinate Mg(2+). Residue 122–123 (GL) participates in thiamine diphosphate binding. C197 contributes to the [4Fe-4S] cluster binding site.

Heterodimer composed of an alpha and a beta subunit. [4Fe-4S] cluster is required as a cofactor. Thiamine diphosphate serves as cofactor. The cofactor is Mg(2+).

It carries out the reaction a 2-oxocarboxylate + 2 oxidized [2Fe-2S]-[ferredoxin] + CoA = an acyl-CoA + 2 reduced [2Fe-2S]-[ferredoxin] + CO2 + H(+). Functionally, catalyzes the coenzyme A-dependent oxidative decarboxylation of different 2-oxoacids such as 2-oxoglutarate, pyruvate and 2-oxobutyrate to form their CoA derivatives. The protein is 2-oxoacid:ferredoxin oxidoreductase 2, subunit beta of Sulfurisphaera tokodaii (strain DSM 16993 / JCM 10545 / NBRC 100140 / 7) (Sulfolobus tokodaii).